The sequence spans 91 residues: uncharacterized protein (91 aa).

The chain crosses the membrane as a helical span at residues 7 to 23 (IALVGVVVVLFGALRYQ).

The protein localises to the membrane. This is an uncharacterized protein from Haemophilus influenzae (strain ATCC 51907 / DSM 11121 / KW20 / Rd).